The primary structure comprises 554 residues: CTP synthase (554 aa).

Residues 1–265 (MTPLIFVTGG…DEIVVNQLKL (265 aa)) form an amidoligase domain region. Position 13 (serine 13) interacts with CTP. Position 13 (serine 13) interacts with UTP. Position 14-19 (14-19 (SLGKGI)) interacts with ATP. Aspartate 71 and glutamate 139 together coordinate Mg(2+). Residues 146–148 (DIE), 186–191 (KTKPTQ), and lysine 222 contribute to the CTP site. Residues 186 to 191 (KTKPTQ) and lysine 222 contribute to the UTP site. In terms of domain architecture, Glutamine amidotransferase type-1 spans 292–545 (TIAVVGKYVD…IRAARERKAG (254 aa)). Glycine 353 is an L-glutamine binding site. The active-site Nucleophile; for glutamine hydrolysis is the cysteine 380. L-glutamine contacts are provided by residues 381-384 (YGMQ), glutamate 404, and arginine 471. Active-site residues include histidine 518 and glutamate 520.

Belongs to the CTP synthase family. Homotetramer.

It catalyses the reaction UTP + L-glutamine + ATP + H2O = CTP + L-glutamate + ADP + phosphate + 2 H(+). The catalysed reaction is L-glutamine + H2O = L-glutamate + NH4(+). The enzyme catalyses UTP + NH4(+) + ATP = CTP + ADP + phosphate + 2 H(+). The protein operates within pyrimidine metabolism; CTP biosynthesis via de novo pathway; CTP from UDP: step 2/2. With respect to regulation, allosterically activated by GTP, when glutamine is the substrate; GTP has no effect on the reaction when ammonia is the substrate. The allosteric effector GTP functions by stabilizing the protein conformation that binds the tetrahedral intermediate(s) formed during glutamine hydrolysis. Inhibited by the product CTP, via allosteric rather than competitive inhibition. In terms of biological role, catalyzes the ATP-dependent amination of UTP to CTP with either L-glutamine or ammonia as the source of nitrogen. Regulates intracellular CTP levels through interactions with the four ribonucleotide triphosphates. The protein is CTP synthase of Stenotrophomonas maltophilia (strain K279a).